The primary structure comprises 274 residues: Mitochondrial S-adenosylmethionine carrier protein (274 aa).

3 Solcar repeats span residues 4 to 77 (PGFV…VKWF), 86 to 168 (LTPM…LKAL), and 177 to 265 (VDSW…THSL). Helical transmembrane passes span 5 to 25 (GFVAALVAGGVAGVSVDLILF), 49 to 69 (IYAGVPSAAIGSFPNAAAFFI), 85 to 105 (YLTPMKHMLAASAGEVVACLI), 142 to 162 (RGYKSTVLREIPFSLVQFPLW), 182 to 202 (SAVCGAFAGGFAAAVTTPLDV), and 238 to 258 (FAGVFPRMAAISLGGFIFLGA).

This sequence belongs to the mitochondrial carrier (TC 2.A.29) family. As to expression, widely expressed. Highly expressed in testis, with moderate expression in brain, heart, kidney, lung, skeletal muscle, pancreas, small intestine and liver, and low expression in spleen.

It localises to the mitochondrion inner membrane. The enzyme catalyses S-adenosyl-L-homocysteine(out) + S-adenosyl-L-methionine(in) = S-adenosyl-L-homocysteine(in) + S-adenosyl-L-methionine(out). Its activity is regulated as follows. Strongly inhibited by tannic acid and Bromocresol Purple. In terms of biological role, mitochondrial S-adenosyl-L-methionine/S-adenosyl-L-homocysteine antiporter. Mediates the exchange of cytosolic S-adenosyl-L-methionine, the predominant methyl-group donor for macromolecule methylation processes, for mitochondrial S-adenosylhomocysteine(SAH), a by-product of methylation reactions. This Homo sapiens (Human) protein is Mitochondrial S-adenosylmethionine carrier protein.